The following is a 299-amino-acid chain: NAD kinase 1 (299 aa).

Asp-62 serves as the catalytic Proton acceptor. NAD(+) is bound by residues 62–63 (DG), Lys-67, 143–144 (ND), Lys-173, and Asp-175.

Belongs to the NAD kinase family. A divalent metal cation is required as a cofactor.

The protein resides in the cytoplasm. It catalyses the reaction NAD(+) + ATP = ADP + NADP(+) + H(+). Its function is as follows. Involved in the regulation of the intracellular balance of NAD and NADP, and is a key enzyme in the biosynthesis of NADP. Catalyzes specifically the phosphorylation on 2'-hydroxyl of the adenosine moiety of NAD to yield NADP. The chain is NAD kinase 1 from Prochlorococcus marinus subsp. pastoris (strain CCMP1986 / NIES-2087 / MED4).